Consider the following 277-residue polypeptide: Glycerol-3-phosphate acyltransferase (277 aa).

A run of 5 helical transmembrane segments spans residues F3 to V23, I55 to L75, P79 to F99, I111 to L131, and L155 to L175. The tract at residues K231–E277 is disordered. 2 stretches are compositionally biased toward basic residues: residues K240 to T253 and K262 to K271.

It belongs to the PlsY family. Probably interacts with PlsX.

It is found in the cell inner membrane. It catalyses the reaction an acyl phosphate + sn-glycerol 3-phosphate = a 1-acyl-sn-glycero-3-phosphate + phosphate. The protein operates within lipid metabolism; phospholipid metabolism. Catalyzes the transfer of an acyl group from acyl-phosphate (acyl-PO(4)) to glycerol-3-phosphate (G3P) to form lysophosphatidic acid (LPA). This enzyme utilizes acyl-phosphate as fatty acyl donor, but not acyl-CoA or acyl-ACP. This chain is Glycerol-3-phosphate acyltransferase, found in Legionella pneumophila (strain Lens).